The chain runs to 129 residues: Small ribosomal subunit protein uS11 (129 aa).

It belongs to the universal ribosomal protein uS11 family. Part of the 30S ribosomal subunit. Interacts with proteins S7 and S18. Binds to IF-3.

In terms of biological role, located on the platform of the 30S subunit, it bridges several disparate RNA helices of the 16S rRNA. Forms part of the Shine-Dalgarno cleft in the 70S ribosome. The polypeptide is Small ribosomal subunit protein uS11 (Nitrosomonas eutropha (strain DSM 101675 / C91 / Nm57)).